The primary structure comprises 454 residues: CCA-adding enzyme (454 aa).

2 residues coordinate ATP: Ser59 and Arg62. Residues Ser59 and Arg62 each coordinate CTP. Residues Asp71, Asp73, and Asp125 each coordinate Mg(2+). Positions 148, 167, and 176 each coordinate ATP. The CTP site is built by His148, Lys167, and Tyr176.

Belongs to the tRNA nucleotidyltransferase/poly(A) polymerase family. Archaeal CCA-adding enzyme subfamily. In terms of assembly, homodimer. Mg(2+) serves as cofactor.

It catalyses the reaction a tRNA precursor + 2 CTP + ATP = a tRNA with a 3' CCA end + 3 diphosphate. The enzyme catalyses a tRNA with a 3' CCA end + 2 CTP + ATP = a tRNA with a 3' CCACCA end + 3 diphosphate. Functionally, catalyzes the addition and repair of the essential 3'-terminal CCA sequence in tRNAs without using a nucleic acid template. Adds these three nucleotides in the order of C, C, and A to the tRNA nucleotide-73, using CTP and ATP as substrates and producing inorganic pyrophosphate. tRNA 3'-terminal CCA addition is required both for tRNA processing and repair. Also involved in tRNA surveillance by mediating tandem CCA addition to generate a CCACCA at the 3' terminus of unstable tRNAs. While stable tRNAs receive only 3'-terminal CCA, unstable tRNAs are marked with CCACCA and rapidly degraded. This is CCA-adding enzyme from Methanosarcina mazei (strain ATCC BAA-159 / DSM 3647 / Goe1 / Go1 / JCM 11833 / OCM 88) (Methanosarcina frisia).